The chain runs to 847 residues: DNA gyrase subunit A (847 aa).

Positions 34 to 533 (LPDVRDGLKP…NYSDINTSDL (500 aa)) constitute a Topo IIA-type catalytic domain. Y122 functions as the O-(5'-phospho-DNA)-tyrosine intermediate in the catalytic mechanism. The short motif at 560 to 566 (QKRGGKG) is the GyrA-box element.

It belongs to the type II topoisomerase GyrA/ParC subunit family. As to quaternary structure, heterotetramer, composed of two GyrA and two GyrB chains. In the heterotetramer, GyrA contains the active site tyrosine that forms a transient covalent intermediate with DNA, while GyrB binds cofactors and catalyzes ATP hydrolysis.

It is found in the cytoplasm. It carries out the reaction ATP-dependent breakage, passage and rejoining of double-stranded DNA.. Its function is as follows. A type II topoisomerase that negatively supercoils closed circular double-stranded (ds) DNA in an ATP-dependent manner to modulate DNA topology and maintain chromosomes in an underwound state. Negative supercoiling favors strand separation, and DNA replication, transcription, recombination and repair, all of which involve strand separation. Also able to catalyze the interconversion of other topological isomers of dsDNA rings, including catenanes and knotted rings. Type II topoisomerases break and join 2 DNA strands simultaneously in an ATP-dependent manner. The chain is DNA gyrase subunit A from Buchnera aphidicola subsp. Baizongia pistaciae (strain Bp).